The following is a 366-amino-acid chain: Ribosomal RNA large subunit methyltransferase M (366 aa).

S-adenosyl-L-methionine-binding positions include serine 188, cysteine 221–glycine 224, aspartate 240, aspartate 260, and aspartate 277. Lysine 306 serves as the catalytic Proton acceptor.

It belongs to the class I-like SAM-binding methyltransferase superfamily. RNA methyltransferase RlmE family. RlmM subfamily. Monomer.

Its subcellular location is the cytoplasm. It carries out the reaction cytidine(2498) in 23S rRNA + S-adenosyl-L-methionine = 2'-O-methylcytidine(2498) in 23S rRNA + S-adenosyl-L-homocysteine + H(+). Functionally, catalyzes the 2'-O-methylation at nucleotide C2498 in 23S rRNA. The protein is Ribosomal RNA large subunit methyltransferase M of Salmonella heidelberg (strain SL476).